The sequence spans 189 residues: Phosphoheptose isomerase (189 aa).

The SIS domain maps to 33-189; sequence CTDTLKAGNK…ELVEREIYGG (157 aa). A substrate-binding site is contributed by 48-50; it reads NGG. 2 residues coordinate Zn(2+): H57 and E61. Substrate is bound by residues E61, 90-91, 116-118, S121, and Q168; these read ND and STS. 2 residues coordinate Zn(2+): Q168 and H176.

Belongs to the SIS family. GmhA subfamily. It depends on Zn(2+) as a cofactor.

It is found in the cytoplasm. The catalysed reaction is 2 D-sedoheptulose 7-phosphate = D-glycero-alpha-D-manno-heptose 7-phosphate + D-glycero-beta-D-manno-heptose 7-phosphate. Its pathway is carbohydrate biosynthesis; D-glycero-D-manno-heptose 7-phosphate biosynthesis; D-glycero-alpha-D-manno-heptose 7-phosphate and D-glycero-beta-D-manno-heptose 7-phosphate from sedoheptulose 7-phosphate: step 1/1. Functionally, catalyzes the isomerization of sedoheptulose 7-phosphate in D-glycero-D-manno-heptose 7-phosphate. This chain is Phosphoheptose isomerase, found in Akkermansia muciniphila (strain ATCC BAA-835 / DSM 22959 / JCM 33894 / BCRC 81048 / CCUG 64013 / CIP 107961 / Muc).